We begin with the raw amino-acid sequence, 356 residues long: Probable G-protein coupled receptor 32 (356 aa).

Over 1 to 44 the chain is Extracellular; the sequence is MNGVSEGTRGCSDRQPGVLTRDRSCSRKMNSSGCLSEEVGSLRP. Asn-30 is a glycosylation site (N-linked (GlcNAc...) asparagine). The chain crosses the membrane as a helical span at residues 45–67; it reads LTVVILSASIVVGVLGNGLVLWM. At 68-78 the chain is on the cytoplasmic side; the sequence is TVFRMARTVST. A helical membrane pass occupies residues 79–100; sequence VCFFHLALADFMLSLSLPIAMY. Residues 101–116 lie on the Extracellular side of the membrane; sequence YIVSRQWLLGEWACKL. A disulfide bridge links Cys-114 with Cys-191. Residues 117–137 traverse the membrane as a helical segment; it reads YITFVFLSYFASNCLLVFISV. At 138 to 156 the chain is on the cytoplasmic side; it reads DRCISVLYPVWALNHRTVQ. The chain crosses the membrane as a helical span at residues 157–178; it reads RASWLAFGVWLLAAALCSAHLK. The Extracellular portion of the chain corresponds to 179 to 220; sequence FRTTRKWNGCTHCYLAFNSDNETAQIWIEGVVEGHIIGTIGH. An N-linked (GlcNAc...) asparagine glycan is attached at Asn-199. The chain crosses the membrane as a helical span at residues 221 to 241; that stretch reads FLLGFLGPLAIIGTCAHLIRA. Residues 242–257 lie on the Cytoplasmic side of the membrane; it reads KLLREGWVHANRPKRL. Residues 258–280 traverse the membrane as a helical segment; sequence LLVLVSAFFIFWSPFNVVLLVHL. The Extracellular segment spans residues 281–300; sequence WRRVMLKEIYHPRMLLILQA. The chain crosses the membrane as a helical span at residues 301–320; sequence SFALGCVNSSLNPFLYVFVG. At 321–356 the chain is on the cytoplasmic side; it reads RDFQEKFFQSLTSALARAFGEEEFLSSCPRGNAPRE.

The protein belongs to the G-protein coupled receptor 1 family. As to expression, expressed in resting primary human macrophages.

It is found in the cell membrane. In terms of biological role, G-protein coupled receptor that binds to several ligands including resolvin D1 (RvD1) with high affinity, leading to rapid and transient activation of numerous intracellular signaling pathways. In macrophages, enhances the RvD1-stimulated phagocytic and clearance functions. Macrophages migrate less toward different chemoattractant stimuli but phagocytose more microbial particles. Prevents the increase in Ca(2+) and activation of ERK1/2 used by histamine and its H1 receptor subtype to induce goblet cell secretion by activating PKC and GRK2 to counter-regulate the histamine receptor. The protein is Probable G-protein coupled receptor 32 (GPR32) of Homo sapiens (Human).